Consider the following 117-residue polypeptide: Putative iron-sulfur cluster insertion protein ErpA (117 aa).

Residues cysteine 45, cysteine 109, and cysteine 111 each coordinate iron-sulfur cluster.

It belongs to the HesB/IscA family. As to quaternary structure, homodimer. Requires iron-sulfur cluster as cofactor.

Its function is as follows. Required for insertion of 4Fe-4S clusters. This chain is Putative iron-sulfur cluster insertion protein ErpA, found in Methylobacillus flagellatus (strain ATCC 51484 / DSM 6875 / VKM B-1610 / KT).